We begin with the raw amino-acid sequence, 348 residues long: Major outer membrane protein P.IB (348 aa).

The first 19 residues, 1 to 19, serve as a signal peptide directing secretion; the sequence is MKKSLIALTLAALPVAAMA.

The protein belongs to the Gram-negative porin family. In terms of assembly, homotrimer.

The protein resides in the cell outer membrane. Serves as a slightly cation selective porin. Major antigen on the gonococcal cell surface and it may have pathogenic properties in addition to its porin activity. The chain is Major outer membrane protein P.IB (porB) from Neisseria gonorrhoeae.